The chain runs to 490 residues: GTPase Der (490 aa).

EngA-type G domains follow at residues 3 to 166 (PVVA…AEAM) and 200 to 373 (IKLA…DSAT). GTP contacts are provided by residues 9–16 (GRPNVGKS), 56–60 (DTGGI), 118–121 (NKVD), 206–213 (GKPNVGKS), 253–257 (DTAGV), and 318–321 (NKWD). The KH-like domain maps to 374 to 458 (RRVSTSMLTR…PIQLRFQEGG (85 aa)).

Belongs to the TRAFAC class TrmE-Era-EngA-EngB-Septin-like GTPase superfamily. EngA (Der) GTPase family. In terms of assembly, associates with the 50S ribosomal subunit.

Functionally, GTPase that plays an essential role in the late steps of ribosome biogenesis. This Shewanella halifaxensis (strain HAW-EB4) protein is GTPase Der.